The following is an 888-amino-acid chain: 3-hydroxy-3-methylglutaryl-coenzyme A reductase (888 aa).

Topologically, residues 1–9 (MLSRLFRMH) are cytoplasmic. A helical membrane pass occupies residues 10-39 (GLFVASHPWEVIVGTVTLTICMMSMNMFTG). Residues 40–56 (NNKICGWNYECPKFEED) are Lumenal-facing. A helical transmembrane segment spans residues 57 to 78 (VLSSDIIILTITRCIAILYIYF). An SSD domain is found at 61-218 (DIIILTITRC…MTFFPACVSL (158 aa)). Positions 75–78 (YIYF) match the INSIG-binding motif motif. The Cytoplasmic portion of the chain corresponds to 79 to 89 (QFQNLRQLGSK). Lysine 89 participates in a covalent cross-link: Glycyl lysine isopeptide (Lys-Gly) (interchain with G-Cter in ubiquitin). Residues 90–114 (YILGIAGLFTIFSSFVFSTVVIHFL) traverse the membrane as a helical segment. Residues 115–123 (DKELTGLNE) are Lumenal-facing. The chain crosses the membrane as a helical span at residues 124–149 (ALPFFLLLIDLSRASTLAKFALSSNS). The Cytoplasmic portion of the chain corresponds to 150 to 159 (QDEVRENIAR). The chain crosses the membrane as a helical span at residues 160–187 (GMAILGPTFTLDALVECLVIGVGTMSGV). Residues 188–191 (RQLE) lie on the Lumenal side of the membrane. A helical membrane pass occupies residues 192 to 220 (IMCCFGCMSVLANYFVFMTFFPACVSLVL). Residues 221–248 (ELSRESREGRPIWLLSHFARVLEEEENK) are Cytoplasmic-facing. A Glycyl lysine isopeptide (Lys-Gly) (interchain with G-Cter in ubiquitin) cross-link involves residue lysine 248. Residues 249–275 (PNPVTQRVKMIMSLGLVLVHAHSRWIA) traverse the membrane as a helical segment. At 276–314 (DPSPQNSTADTSKVSLGLDENVSKRIEPSVSLWQFYLSK) the chain is on the lumenal side. 2 N-linked (GlcNAc...) asparagine glycosylation sites follow: asparagine 281 and asparagine 296. The helical transmembrane segment at 315-339 (MISMDIEQVITLSLALLLAVKYIFF) threads the bilayer. Over 340-888 (EQTETESTLS…LQGACTKKTA (549 aa)) the chain is Cytoplasmic. Residues glutamate 559, lysine 691, and aspartate 767 each act as charge relay system in the active site. The active-site Proton donor is histidine 866. Serine 872 carries the post-translational modification Phosphoserine; by AMPK.

Belongs to the HMG-CoA reductase family. In terms of assembly, homotetramer. Homodimer. Interacts (via its SSD) with INSIG1; the interaction, accelerated by sterols, leads to the recruitment of HMGCR to AMFR/gp78 for its ubiquitination by the sterol-mediated ERAD pathway. Interacts with UBIAD1. In terms of processing, undergoes sterol-mediated ubiquitination and ER-associated degradation (ERAD). Accumulation of sterols in the endoplasmic reticulum (ER) membrane, triggers binding of the reductase to the ER membrane protein INSIG1 or INSIG2. The INSIG1 binding leads to the recruitment of the ubiquitin ligase, AMFR/gp78, RNF139 or RNF145, initiating ubiquitination of the reductase. The ubiquitinated reductase is then extracted from the ER membrane and delivered to cytosolic 26S proteosomes by a mechanism probably mediated by the ATPase Valosin-containing protein VCP/p97. The INSIG2-binding leads to the recruitment of the ubiquitin ligase RNF139, initiating ubiquitination of the reductase. Lys-248 is the main site of ubiquitination. Ubiquitination is enhanced by the presence of a geranylgeranylated protein. Post-translationally, N-glycosylated. Deglycosylated by NGLY1 on release from the endoplasmic reticulum (ER) in a sterol-mediated manner. Phosphorylated. Phosphorylation at Ser-872 reduces the catalytic activity.

It is found in the endoplasmic reticulum membrane. Its subcellular location is the peroxisome membrane. The catalysed reaction is (R)-mevalonate + 2 NADP(+) + CoA = (3S)-3-hydroxy-3-methylglutaryl-CoA + 2 NADPH + 2 H(+). The protein operates within metabolic intermediate biosynthesis; (R)-mevalonate biosynthesis; (R)-mevalonate from acetyl-CoA: step 3/3. Regulated by a negative feedback mechanism through sterols and non-sterol metabolites derived from mevalonate. Phosphorylation at Ser-872 down-regulates the catalytic activity. Functionally, catalyzes the conversion of (3S)-hydroxy-3-methylglutaryl-CoA (HMG-CoA) to mevalonic acid, the rate-limiting step in the synthesis of cholesterol and other isoprenoids, thus plays a critical role in cellular cholesterol homeostasis. This chain is 3-hydroxy-3-methylglutaryl-coenzyme A reductase (HMGCR), found in Pongo abelii (Sumatran orangutan).